A 329-amino-acid polypeptide reads, in one-letter code: Ankyrin repeat and SOCS box protein 5 (329 aa).

ANK repeat units follow at residues 69–98 (ADRS…NVNA), 102–131 (DHVT…NVNA), 135–164 (DGVT…KAQL), 167–196 (CLPS…DVDQ), 200–229 (HLGT…DVQK), and 232–261 (YWDT…DINA). The 52-residue stretch at 278 to 329 (MVERILLQHEATPSSLYQLCRLCIRSYIGKPRLHLIPQLQLPTLLKNFLQYR) folds into the SOCS box domain.

It belongs to the ankyrin SOCS box (ASB) family.

It functions in the pathway protein modification; protein ubiquitination. In terms of biological role, may be a substrate-recognition component of a SCF-like ECS (Elongin-Cullin-SOCS-box protein) E3 ubiquitin-protein ligase complex which mediates the ubiquitination and subsequent proteasomal degradation of target proteins. May play a role in the initiation of arteriogenesis. In Homo sapiens (Human), this protein is Ankyrin repeat and SOCS box protein 5 (ASB5).